We begin with the raw amino-acid sequence, 965 residues long: Klaroid protein (965 aa).

A disordered region spans residues 1–20 (MSENTYQIETRRRSRSKTPF). 2 helical membrane passes run 303–323 (TIGGGLASLLRYLYVFIGSVL) and 343–363 (FLIFLLILLPLLLLSGWLLLQ). The stretch at 585-612 (SSDAEVQIERLNREIAFIKLALSDKQAE) forms a coiled coil. An SUN domain is found at 801–963 (GGQILSTRCT…YRFRVHGKPP (163 aa)).

Core component of the LINC complex which is composed of inner nuclear membrane SUN domain-containing proteins coupled to outer nuclear membrane KASH domain-containing nesprins. In terms of tissue distribution, expressed in all cells in the eye disk.

Its subcellular location is the membrane. The protein resides in the cytoplasm. It is found in the cytoskeleton. The protein localises to the microtubule organizing center. It localises to the perinuclear region. Component of the LINC (LInker of Nucleoskeleton and Cytoskeleton) complex involved in the connection between the nuclear lamina and the cytoskeleton. Is required to nuclear migration in eye and to anchor klar in the nuclear membrane. The sequence is that of Klaroid protein from Drosophila melanogaster (Fruit fly).